A 565-amino-acid polypeptide reads, in one-letter code: Periplasmic trehalase (565 aa).

The signal sequence occupies residues methionine 1–alanine 30. Residues arginine 152, tryptophan 159–aspartate 160, asparagine 196, arginine 205–glutamine 207, arginine 277–glutamate 279, and glycine 310 contribute to the substrate site. Catalysis depends on proton donor/acceptor residues aspartate 312 and glutamate 496. Glutamate 511 is a substrate binding site. Residues cysteine 539–proline 565 form a disordered region.

This sequence belongs to the glycosyl hydrolase 37 family. As to quaternary structure, monomer.

Its subcellular location is the periplasm. The enzyme catalyses alpha,alpha-trehalose + H2O = alpha-D-glucose + beta-D-glucose. Provides the cells with the ability to utilize trehalose at high osmolarity by splitting it into glucose molecules that can subsequently be taken up by the phosphotransferase-mediated uptake system. This is Periplasmic trehalase from Escherichia coli O17:K52:H18 (strain UMN026 / ExPEC).